Consider the following 256-residue polypeptide: Trypsin alpha (256 aa).

Residues 1 to 22 (MLKIVILLSAVVCALGGTVPEG) form the signal peptide. The propeptide at 23–30 (LLPQLDGR) is activation peptide. The Peptidase S1 domain maps to 31 to 254 (IVGGSATTIS…LRSWVISTAN (224 aa)). A disulfide bridge links cysteine 56 with cysteine 72. Catalysis depends on charge relay system residues histidine 71 and aspartate 116. 2 cysteine pairs are disulfide-bonded: cysteine 180-cysteine 197 and cysteine 206-cysteine 230. The active-site Charge relay system is serine 210.

This sequence belongs to the peptidase S1 family.

The protein resides in the secreted. The protein localises to the extracellular space. It catalyses the reaction Preferential cleavage: Arg-|-Xaa, Lys-|-Xaa.. The polypeptide is Trypsin alpha (alphaTry) (Drosophila erecta (Fruit fly)).